Here is a 656-residue protein sequence, read N- to C-terminus: NADH-ubiquinone oxidoreductase chain 5 (656 aa).

A run of 17 helical transmembrane segments spans residues 5-23, 30-52, 81-103, 112-129, 133-155, 168-190, 200-222, 243-262, 272-294, 301-320, 324-346, 367-389, 409-431, 452-471, 514-536, 607-629, and 634-653; these read IIILPVLGSIVAGFFGRKL, IITCSCVIVTTILALLAWVEVGF, LTVSMLLPVLIISSLVHIYSISY, RFFSYLSLFTFMMIILVT, YLLMFVGWEGVGVCSYLLVSFWF, FLTNRVGDCFLTIGMFAILWSLG, LAPYINENIITIIGICLVIGAMA, VSALIHAATMVTAGVYLLMR, TVLLICLWLGAITTVFSSLVGLF, VIAYSTMSQLGLMVVAIGLS, IALFHLVNHAFYKAALFLGAGSI, PLTYSIILIASLSLAAFPFLTGF, SVYAISTIGAIFTTLYSVKVIYL, IFLTLPLVILAIFSIFFGYL, FIFTVLFSILAILLSEFIPGSVF, LSTGVVTSYALYILLGLISFIII, and QISSSLIVLLIILTLFSLNF.

The protein belongs to the complex I subunit 5 family.

It is found in the mitochondrion inner membrane. The enzyme catalyses a ubiquinone + NADH + 5 H(+)(in) = a ubiquinol + NAD(+) + 4 H(+)(out). Its function is as follows. Core subunit of the mitochondrial membrane respiratory chain NADH dehydrogenase (Complex I) that is believed to belong to the minimal assembly required for catalysis. Complex I functions in the transfer of electrons from NADH to the respiratory chain. The immediate electron acceptor for the enzyme is believed to be ubiquinone. In Cryphonectria parasitica (Chestnut blight fungus), this protein is NADH-ubiquinone oxidoreductase chain 5 (ND5).